A 134-amino-acid polypeptide reads, in one-letter code: ASAGVAVTNLNLKPGHCVEIKGSIPPDCKGFAVNLGEDASNFLLHFNARFDLHGDVNKIVCNSKEADAWGSEQREEVFPFQQGAEVMVCFEYQTQKIIIKFSSGDQFSFPVRKVLPSIPFLSLEGLAFKSITTE.

Residue alanine 1 is modified to N-acetylalanine. The 131-residue stretch at 4 to 134 folds into the Galectin domain; that stretch reads GVAVTNLNLK…GLAFKSITTE (131 aa). A beta-D-galactoside is bound by residues 45-49, histidine 53, asparagine 62, and 69-72; these read HFNAR and WGSE.

In terms of assembly, homodimer.

The protein localises to the secreted. It localises to the extracellular space. It is found in the extracellular matrix. Functionally, may regulate cell apoptosis and cell differentiation. Binds beta-galactoside and a wide array of complex carbohydrates. The sequence is that of Galectin-1 from Rhinella arenarum (Argentine common toad).